A 426-amino-acid polypeptide reads, in one-letter code: MINPWSSSDFFDYERLKKEFGISDQSDNIDHFLFRRKVILGQRGFEYIKYAIDNKIKFNVMTGLMPSGEMHLGNKSAIDQVIYFQKLGGSVSIAVADLESYSTRGIPLDKAREIAIEKYILNYIAMGLQPCEIYFQSKNKDVQFLSYILGNWTNMNELKALYGFTDSNDILHINAPLIQAADVLHTQLNNYGGPAPTVVPVGFDQDPHIRLMRDLAKRMRIFNVFYDGGITVSIKGKGDSTMPVDQAYEYLSKRFSEVTKDYEYRVVKAKDGKEEDIVRTDIDLAKIGSEFNVFSFIPPSATYQKLMKGLKGGKMSSSVPDSLISMNDDVEEAKRKIMRALTGGRDTEEEQRKLGGEPEKCPVFDLYNYEIDDDKYVNEVFEECKSGKRMCGYCKREIADKMSIFLKDIKEKREIAREKLSLYIHE.

A 'HIGH' region motif is present at residues P66 to N74. The short motif at K314 to S318 is the 'KMSKS' region element.

The protein belongs to the class-I aminoacyl-tRNA synthetase family.

It is found in the cytoplasm. It carries out the reaction tRNA(Trp) + L-tryptophan + ATP = L-tryptophyl-tRNA(Trp) + AMP + diphosphate + H(+). The polypeptide is Tryptophan--tRNA ligase (Thermoplasma volcanium (strain ATCC 51530 / DSM 4299 / JCM 9571 / NBRC 15438 / GSS1)).